Reading from the N-terminus, the 239-residue chain is uncharacterized protein (239 aa).

7 helical membrane-spanning segments follow: residues 20-40 (ILIW…WLVL), 48-68 (FSSV…LGLL), 80-100 (WILL…GFHF), 106-126 (IYAM…TYLF), 143-163 (LILL…EILV), 164-184 (MIAG…DILH), and 192-212 (IPGA…VLYF).

It belongs to the cytomegalovirus US12 family.

It is found in the membrane. This is an uncharacterized protein from Homo sapiens (Human).